The sequence spans 582 residues: MHNDKDLSTWQTFRRLWPTIAPFKAGLIVAGVALILNAASDTFMLSLLKPLLDDGFGKTDRSVLVWMPLVVIGLMILRGITSYVSSYCISWVSGKVVMTMRRRLFGHMMGMPVSFFDKQSTGTLLSRITYDSEQVASSSSGALITVVREGASIIGLFIMMFYYSWQLSIILIVLAPIVSIAIRVVSKRFRNISKNMQNTMGQVTTSAEQMLKGHKEVLIFGGQEVETKRFDKVSNRMRLQGMKMVSASSISDPIIQLIASLALAFVLYAASFPSVMDNLTAGTITVVFSSMIALMRPLKSLTNVNAQFQRGMAACQTLFTILDSEQEKDEGKRVIERATGDVEFRNVTFTYPGRDVPALRNINLKIPAGKTVALVGRSGSGKSTIASLITRFYDIDEGEILMDGHDLREYTLASLRNQVALVSQNVHLFNDTVANNIAYARTEQYSREQIEEAARMAYAIDFINKMDNGLDTVIGENGVLLSGGQRQRIAIARALLRDSPILILDEATSALDTESERAIQAALDELQKNRTSLVIAHRLSTIEKADEIVVVEDGVIVERGTHNDLLEHRGVYAQLHKMQFGQ.

Helical transmembrane passes span 16–36 (LWPT…ALIL), 63–83 (VLVW…ITSY), 153–173 (IIGL…ILIV), 253–273 (PIIQ…ASFP), and 275–295 (VMDN…IALM). The region spanning 28-310 (IVAGVALILN…LTNVNAQFQR (283 aa)) is the ABC transmembrane type-1 domain. An ABC transporter domain is found at 342 to 578 (VEFRNVTFTY…RGVYAQLHKM (237 aa)). 376–383 (GRSGSGKS) lines the ATP pocket.

It belongs to the ABC transporter superfamily. Lipid exporter (TC 3.A.1.106) family. As to quaternary structure, homodimer.

The protein resides in the cell inner membrane. It catalyses the reaction ATP + H2O + lipid A-core oligosaccharideSide 1 = ADP + phosphate + lipid A-core oligosaccharideSide 2.. In terms of biological role, involved in lipopolysaccharide (LPS) biosynthesis. Translocates lipid A-core from the inner to the outer leaflet of the inner membrane. Transmembrane domains (TMD) form a pore in the inner membrane and the ATP-binding domain (NBD) is responsible for energy generation. This Shigella sonnei (strain Ss046) protein is ATP-dependent lipid A-core flippase.